The primary structure comprises 204 residues: Partner of Y14 and mago (204 aa).

Disordered regions lie at residues 1–121 (MGSR…QSVN) and 133–153 (SSNN…EDVE). Basic and acidic residues predominate over residues 7 to 36 (EQGKRMAELSKNLKEGERILEPTRRPDGTL). The span at 104 to 121 (KANSSEDGSASNGSQSVN) shows a compositional bias: polar residues. The Nuclear export signal signature appears at 195 to 200 (ELKALE).

This sequence belongs to the pym family. In terms of assembly, interacts with MAGO and Y14. As to expression, expressed in root and shoot meristems, cotyledons, vascular tissues of leaves, receptacle of flowers and siliques, and pollen grains.

It localises to the cytoplasm. The protein resides in the nucleus. The protein localises to the nucleolus. Its subcellular location is the nucleoplasm. Its function is as follows. Key regulator of the exon junction complex (EJC), a multiprotein complex that associates immediately upstream of the exon-exon junction on mRNAs and serves as a positional landmark for the intron exon structure of genes and directs post-transcriptional processes in the cytoplasm such as mRNA export, nonsense-mediated mRNA decay (NMD) or translation. Acts as an EJC disassembly factor, allowing translation-dependent EJC removal and recycling by disrupting mature EJC from spliced mRNAs. Can increase in vitro the expression from reporter constructs that contain leader introns required for the expression of different genes. In association with MAGO and PYM, participates in intron-mediated enhancement of gene expression. The sequence is that of Partner of Y14 and mago from Arabidopsis thaliana (Mouse-ear cress).